The primary structure comprises 424 residues: Protein shisa-9 (424 aa).

The signal sequence occupies residues 1–23 (MRRVLRLLLGCFLTELCARVCRA). Residues 24-149 (QERAGHGQLA…DPLHDPTKDK (126 aa)) lie on the Extracellular side of the membrane. Residues N45, N89, and N116 are each glycosylated (N-linked (GlcNAc...) asparagine). A helical membrane pass occupies residues 150-170 (TNLIVYIICGVVAVMVLVGIF). The Cytoplasmic segment spans residues 171 to 424 (TKLGLEKAHR…ITNSKTEVTV (254 aa)). The disordered stretch occupies residues 333–424 (PRAFSPEHGP…ITNSKTEVTV (92 aa)). The segment covering 414–424 (FITNSKTEVTV) has biased composition (polar residues).

The protein belongs to the shisa family. SHISA9 subfamily. In terms of assembly, component of some AMPA receptors (ionotropic glutamate receptors) complex, at least composed of some AMPA receptor (GRIA1, GRIA2 and/or GRIA3), CACNG2 and SHISA9, as well as low level of DLG4.

The protein localises to the cell projection. It is found in the dendritic spine membrane. Its subcellular location is the synapse. Its function is as follows. Regulator of short-term neuronal synaptic plasticity in the dentate gyrus. Associates with AMPA receptors (ionotropic glutamate receptors) in synaptic spines and promotes AMPA receptor desensitization at excitatory synapses. The chain is Protein shisa-9 (SHISA9) from Homo sapiens (Human).